A 223-amino-acid chain; its full sequence is Phosphoribosylformylglycinamidine synthase subunit PurQ (223 aa).

The region spanning 3–223 is the Glutamine amidotransferase type-1 domain; it reads SAVILLPGLN…LFAGALGITA (221 aa). Cys-87 acts as the Nucleophile in catalysis. Residues His-197 and Glu-199 contribute to the active site.

Part of the FGAM synthase complex composed of 1 PurL, 1 PurQ and 2 PurS subunits.

Its subcellular location is the cytoplasm. It catalyses the reaction N(2)-formyl-N(1)-(5-phospho-beta-D-ribosyl)glycinamide + L-glutamine + ATP + H2O = 2-formamido-N(1)-(5-O-phospho-beta-D-ribosyl)acetamidine + L-glutamate + ADP + phosphate + H(+). The enzyme catalyses L-glutamine + H2O = L-glutamate + NH4(+). The protein operates within purine metabolism; IMP biosynthesis via de novo pathway; 5-amino-1-(5-phospho-D-ribosyl)imidazole from N(2)-formyl-N(1)-(5-phospho-D-ribosyl)glycinamide: step 1/2. Its function is as follows. Part of the phosphoribosylformylglycinamidine synthase complex involved in the purines biosynthetic pathway. Catalyzes the ATP-dependent conversion of formylglycinamide ribonucleotide (FGAR) and glutamine to yield formylglycinamidine ribonucleotide (FGAM) and glutamate. The FGAM synthase complex is composed of three subunits. PurQ produces an ammonia molecule by converting glutamine to glutamate. PurL transfers the ammonia molecule to FGAR to form FGAM in an ATP-dependent manner. PurS interacts with PurQ and PurL and is thought to assist in the transfer of the ammonia molecule from PurQ to PurL. This Brucella suis biovar 1 (strain 1330) protein is Phosphoribosylformylglycinamidine synthase subunit PurQ.